The sequence spans 211 residues: Thiamine-phosphate synthase (211 aa).

Residues 40-42 (QLR) and Asn-72 each bind 4-amino-2-methyl-5-(diphosphooxymethyl)pyrimidine. Asp-73 and Asp-92 together coordinate Mg(2+). Ser-111 contacts 4-amino-2-methyl-5-(diphosphooxymethyl)pyrimidine. Residue 136–138 (TST) coordinates 2-[(2R,5Z)-2-carboxy-4-methylthiazol-5(2H)-ylidene]ethyl phosphate. 4-amino-2-methyl-5-(diphosphooxymethyl)pyrimidine is bound at residue Lys-139. 2-[(2R,5Z)-2-carboxy-4-methylthiazol-5(2H)-ylidene]ethyl phosphate contacts are provided by residues Gly-167 and 187–188 (VS).

The protein belongs to the thiamine-phosphate synthase family. Requires Mg(2+) as cofactor.

The enzyme catalyses 2-[(2R,5Z)-2-carboxy-4-methylthiazol-5(2H)-ylidene]ethyl phosphate + 4-amino-2-methyl-5-(diphosphooxymethyl)pyrimidine + 2 H(+) = thiamine phosphate + CO2 + diphosphate. It catalyses the reaction 2-(2-carboxy-4-methylthiazol-5-yl)ethyl phosphate + 4-amino-2-methyl-5-(diphosphooxymethyl)pyrimidine + 2 H(+) = thiamine phosphate + CO2 + diphosphate. It carries out the reaction 4-methyl-5-(2-phosphooxyethyl)-thiazole + 4-amino-2-methyl-5-(diphosphooxymethyl)pyrimidine + H(+) = thiamine phosphate + diphosphate. It participates in cofactor biosynthesis; thiamine diphosphate biosynthesis; thiamine phosphate from 4-amino-2-methyl-5-diphosphomethylpyrimidine and 4-methyl-5-(2-phosphoethyl)-thiazole: step 1/1. In terms of biological role, condenses 4-methyl-5-(beta-hydroxyethyl)thiazole monophosphate (THZ-P) and 2-methyl-4-amino-5-hydroxymethyl pyrimidine pyrophosphate (HMP-PP) to form thiamine monophosphate (TMP). In Laribacter hongkongensis (strain HLHK9), this protein is Thiamine-phosphate synthase.